The following is a 151-amino-acid chain: NADPH-dependent 7-cyano-7-deazaguanine reductase (151 aa).

The active-site Thioimide intermediate is Cys51. The active-site Proton donor is the Asp58. Residues 73 to 75 and 92 to 93 each bind substrate; these read VES and HE.

The protein belongs to the GTP cyclohydrolase I family. QueF type 1 subfamily.

Its subcellular location is the cytoplasm. It carries out the reaction 7-aminomethyl-7-carbaguanine + 2 NADP(+) = 7-cyano-7-deazaguanine + 2 NADPH + 3 H(+). Its pathway is tRNA modification; tRNA-queuosine biosynthesis. Functionally, catalyzes the NADPH-dependent reduction of 7-cyano-7-deazaguanine (preQ0) to 7-aminomethyl-7-deazaguanine (preQ1). The sequence is that of NADPH-dependent 7-cyano-7-deazaguanine reductase from Bacteroides fragilis (strain ATCC 25285 / DSM 2151 / CCUG 4856 / JCM 11019 / LMG 10263 / NCTC 9343 / Onslow / VPI 2553 / EN-2).